The primary structure comprises 721 residues: Dipeptidyl-peptidase 5 (721 aa).

The signal sequence occupies residues methionine 1–alanine 18. 4 N-linked (GlcNAc...) asparagine glycosylation sites follow: asparagine 75, asparagine 94, asparagine 151, and asparagine 254. Residues alanine 271 to proline 297 form a disordered region. 2 N-linked (GlcNAc...) asparagine glycosylation sites follow: asparagine 380 and asparagine 450. Serine 560 functions as the Charge relay system in the catalytic mechanism. A glycan (N-linked (GlcNAc...) asparagine) is linked at asparagine 607. Residues aspartate 643 and histidine 675 each act as charge relay system in the active site.

Belongs to the peptidase S9C family. N-glycosylated. In terms of tissue distribution, expressed in mycelia and conidia.

It is found in the secreted. Its function is as follows. May be involved in metabolism of dipeptides or may affect host defense mechanisms. Has a substrate specificity limited to the hydrolysis of X-Ala, His-Ser, and Ser-Tyr dipeptides at a neutral pH optimum. The chain is Dipeptidyl-peptidase 5 from Aspergillus fumigatus (strain ATCC MYA-4609 / CBS 101355 / FGSC A1100 / Af293) (Neosartorya fumigata).